The primary structure comprises 674 residues: Probable copper-transporting P-type ATPase B (674 aa).

The segment at 1–20 is disordered; sequence MNHSNHMHHDNHESHHHYSG. 6 consecutive transmembrane segments (helical) span residues 32-52, 57-77, 95-115, 127-147, 284-304, and 315-335; these read FFVSLIFAIPIILLSPMMGVN, FTFPGSEWVVLILSTILFFYG, GMMTLVALGISVAYIYSLYAF, TMDFFWELATLILIMLLGHWI, GYLFYFAVIVGVISFIVWMLI, and LVTVLVIACPHALGLAIPLVT. Asp-367 functions as the 4-aspartylphosphate intermediate in the catalytic mechanism. Residues Asp-565 and Asp-569 each coordinate Mg(2+). 2 helical membrane passes run 623–645 and 649–671; these read LWWGAGYNIVAVPLAAGALAFIG and SPAVGAILMSLSTVIVAINAFTL.

Belongs to the cation transport ATPase (P-type) (TC 3.A.3) family. Type IB subfamily.

The protein localises to the cell membrane. It catalyses the reaction Cu(+)(in) + ATP + H2O = Cu(+)(out) + ADP + phosphate + H(+). Its function is as follows. Involved in copper transport. This chain is Probable copper-transporting P-type ATPase B (copB), found in Staphylococcus haemolyticus (strain JCSC1435).